Reading from the N-terminus, the 53-residue chain is Bowman-Birk type proteinase inhibitor 1 (53 aa).

Intrachain disulfides connect cysteine 9–cysteine 24, cysteine 12–cysteine 51, cysteine 14–cysteine 22, cysteine 31–cysteine 38, and cysteine 40–cysteine 48.

As to quaternary structure, dimer.

Its function is as follows. Inhibits trypsin (IC(50)=6.20 nM), neutrophil elastase (ELANE) and, to a lesser extent, alpha-chymotrypsin (IC(50)=3.44 uM). The protein is Bowman-Birk type proteinase inhibitor 1 of Lathyrus sativus (White vetchling).